A 61-amino-acid polypeptide reads, in one-letter code: Large ribosomal subunit protein bL32 (61 aa).

Basic residues predominate over residues 1–16 (MAVPKRKTSPSRRGMR). The interval 1–61 (MAVPKRKTSP…RQILKPKAEA (61 aa)) is disordered. Residues 28-44 (VEDKDSGELRRPHHLDL) are compositionally biased toward basic and acidic residues.

This sequence belongs to the bacterial ribosomal protein bL32 family.

The sequence is that of Large ribosomal subunit protein bL32 from Xanthobacter autotrophicus (strain ATCC BAA-1158 / Py2).